Here is a 512-residue protein sequence, read N- to C-terminus: GMP synthase [glutamine-hydrolyzing] (512 aa).

In terms of domain architecture, Glutamine amidotransferase type-1 spans 9 to 198; the sequence is GVLVVDFGGQ…WLSLVGAPRT (190 aa). Cys-87 functions as the Nucleophile in the catalytic mechanism. Residues His-173 and Glu-175 contribute to the active site. The 189-residue stretch at 199–387 folds into the GMPS ATP-PPase domain; that stretch reads WRPGDMVSEL…LGVPRELIWK (189 aa). 226 to 232 serves as a coordination point for ATP; it reads SGGVDST.

The catalysed reaction is XMP + L-glutamine + ATP + H2O = GMP + L-glutamate + AMP + diphosphate + 2 H(+). It participates in purine metabolism; GMP biosynthesis; GMP from XMP (L-Gln route): step 1/1. Catalyzes the synthesis of GMP from XMP. The polypeptide is GMP synthase [glutamine-hydrolyzing] (guaA) (Aeropyrum pernix (strain ATCC 700893 / DSM 11879 / JCM 9820 / NBRC 100138 / K1)).